Here is a 636-residue protein sequence, read N- to C-terminus: Biosynthetic arginine decarboxylase (636 aa).

Lys110 carries the post-translational modification N6-(pyridoxal phosphate)lysine. Residue 290–300 (IDVGGGLGVDY) coordinates substrate.

This sequence belongs to the Orn/Lys/Arg decarboxylase class-II family. SpeA subfamily. The cofactor is Mg(2+). Requires pyridoxal 5'-phosphate as cofactor.

It carries out the reaction L-arginine + H(+) = agmatine + CO2. Its function is as follows. Catalyzes the biosynthesis of agmatine from arginine. The sequence is that of Biosynthetic arginine decarboxylase from Pseudomonas aeruginosa (strain ATCC 15692 / DSM 22644 / CIP 104116 / JCM 14847 / LMG 12228 / 1C / PRS 101 / PAO1).